The primary structure comprises 977 residues: Alanine--tRNA ligase (977 aa).

The segment at 512–535 is disordered; the sequence is SQVDSKLQSSTPAGTGSYDSKQVS. Histidine 618, histidine 622, cysteine 720, and histidine 724 together coordinate Zn(2+).

The protein belongs to the class-II aminoacyl-tRNA synthetase family. The cofactor is Zn(2+).

The protein localises to the cytoplasm. The catalysed reaction is tRNA(Ala) + L-alanine + ATP = L-alanyl-tRNA(Ala) + AMP + diphosphate. Its function is as follows. Catalyzes the attachment of alanine to tRNA(Ala) in a two-step reaction: alanine is first activated by ATP to form Ala-AMP and then transferred to the acceptor end of tRNA(Ala). Also edits incorrectly charged Ser-tRNA(Ala) and Gly-tRNA(Ala) via its editing domain. The protein is Alanine--tRNA ligase of Leptospira interrogans serogroup Icterohaemorrhagiae serovar copenhageni (strain Fiocruz L1-130).